Reading from the N-terminus, the 1179-residue chain is ATP-dependent helicase/deoxyribonuclease subunit B (1179 aa).

Belongs to the helicase family. AddB/RexB type 2 subfamily. Heterodimer of AddA and RexB. Requires Mg(2+) as cofactor.

Functionally, the heterodimer acts as both an ATP-dependent DNA helicase and an ATP-dependent, dual-direction single-stranded exonuclease. Recognizes the chi site generating a DNA molecule suitable for the initiation of homologous recombination. This subunit has 5' -&gt; 3' nuclease activity but not helicase activity. This is ATP-dependent helicase/deoxyribonuclease subunit B from Lactobacillus delbrueckii subsp. bulgaricus (strain ATCC 11842 / DSM 20081 / BCRC 10696 / JCM 1002 / NBRC 13953 / NCIMB 11778 / NCTC 12712 / WDCM 00102 / Lb 14).